The primary structure comprises 174 residues: ATP-dependent protease subunit HslV (174 aa).

Residue Thr2 is part of the active site. Positions 157, 160, and 163 each coordinate Na(+).

This sequence belongs to the peptidase T1B family. HslV subfamily. As to quaternary structure, a double ring-shaped homohexamer of HslV is capped on each side by a ring-shaped HslU homohexamer. The assembly of the HslU/HslV complex is dependent on binding of ATP.

The protein resides in the cytoplasm. It catalyses the reaction ATP-dependent cleavage of peptide bonds with broad specificity.. With respect to regulation, allosterically activated by HslU binding. In terms of biological role, protease subunit of a proteasome-like degradation complex believed to be a general protein degrading machinery. The protein is ATP-dependent protease subunit HslV of Shewanella loihica (strain ATCC BAA-1088 / PV-4).